The chain runs to 333 residues: GTPase Obg (333 aa).

Residues Gly-4–Leu-162 enclose the Obg domain. One can recognise an OBG-type G domain in the interval Ala-163 to Asn-332. Residues Gly-169–Ser-176, Phe-194–Lys-198, Asp-216–Gly-219, Ser-283–Asp-286, and Ser-313–Val-315 each bind GTP. Residues Ser-176 and Thr-196 each contribute to the Mg(2+) site.

This sequence belongs to the TRAFAC class OBG-HflX-like GTPase superfamily. OBG GTPase family. As to quaternary structure, monomer. Requires Mg(2+) as cofactor.

It localises to the cytoplasm. Its function is as follows. An essential GTPase which binds GTP, GDP and possibly (p)ppGpp with moderate affinity, with high nucleotide exchange rates and a fairly low GTP hydrolysis rate. Plays a role in control of the cell cycle, stress response, ribosome biogenesis and in those bacteria that undergo differentiation, in morphogenesis control. The sequence is that of GTPase Obg from Flavobacterium johnsoniae (strain ATCC 17061 / DSM 2064 / JCM 8514 / BCRC 14874 / CCUG 350202 / NBRC 14942 / NCIMB 11054 / UW101) (Cytophaga johnsonae).